The chain runs to 199 residues: MKQSHFFAHLSRLKLINRWPLMRNVRTENVSEHSLQVAMVAHALAAIKNRKFGGNVNAERIALLAMYHDASEVLTGDLPTPVKYFNAQIAQEYKAIEKIAQQKLVDMVPEELRDIFAPLIDEHAYSDEEKSLVKQADALCAYLKCLEELAAGNNEFLLAKTRLEATLEARRSQEMDYFMEVFVPSFHLSLDEISQDSPL.

Substrate contacts are provided by residues 18 to 19 and His33; that span reads RW. The HD domain maps to 30-142; that stretch reads VSEHSLQVAM…VKQADALCAY (113 aa). His33, His68, and Asp69 together coordinate a divalent metal cation. Residues Asp69, 77-80, and Asp137 contribute to the substrate site; that span reads DLPT. Asp137 provides a ligand contact to a divalent metal cation.

This sequence belongs to the 5DNU family. Homodimer. Requires a divalent metal cation as cofactor.

The protein localises to the cytoplasm. It catalyses the reaction a 2'-deoxyribonucleoside 5'-phosphate + H2O = a 2'-deoxyribonucleoside + phosphate. Catalyzes the strictly specific dephosphorylation of 2'-deoxyribonucleoside 5'-monophosphates. This Shigella flexneri serotype 5b (strain 8401) protein is 5'-deoxynucleotidase YfbR.